The sequence spans 289 residues: Cell division protein ZipA (289 aa).

Position 1 (methionine 1) is a topological domain, periplasmic. A helical transmembrane segment spans residues aspartate 2–phenylalanine 22. Residues aspartate 23–arginine 289 lie on the Cytoplasmic side of the membrane. The disordered stretch occupies residues histidine 65–alanine 141. The span at arginine 81–aspartate 99 shows a compositional bias: basic and acidic residues. Residues leucine 100–aspartate 114 are compositionally biased toward acidic residues.

This sequence belongs to the ZipA family. As to quaternary structure, interacts with FtsZ via their C-terminal domains.

Its subcellular location is the cell inner membrane. Functionally, essential cell division protein that stabilizes the FtsZ protofilaments by cross-linking them and that serves as a cytoplasmic membrane anchor for the Z ring. Also required for the recruitment to the septal ring of downstream cell division proteins. This is Cell division protein ZipA from Pseudomonas aeruginosa (strain UCBPP-PA14).